We begin with the raw amino-acid sequence, 500 residues long: tRNA (guanine(37)-N(1))-methyltransferase (500 aa).

S-adenosyl-L-methionine is bound by residues His-215, 253–254, 281–282, and Asn-312; these read DL and DA. The disordered stretch occupies residues 463 to 500; it reads QIVAKKTPKPAPRPLPAKNKTTPDTNKMETDLTKLEMK. Residues 488–500 show a composition bias toward basic and acidic residues; the sequence is NKMETDLTKLEMK.

Belongs to the class I-like SAM-binding methyltransferase superfamily. TRM5/TYW2 family. In terms of assembly, monomer.

It is found in the mitochondrion matrix. It localises to the nucleus. The protein localises to the cytoplasm. The enzyme catalyses guanosine(37) in tRNA + S-adenosyl-L-methionine = N(1)-methylguanosine(37) in tRNA + S-adenosyl-L-homocysteine + H(+). Its function is as follows. Specifically methylates the N1 position of guanosine-37 in various cytoplasmic and mitochondrial tRNAs. Methylation is not dependent on the nature of the nucleoside 5' of the target nucleoside. This is the first step in the biosynthesis of wybutosine (yW), a modified base adjacent to the anticodon of tRNAs and required for accurate decoding. This is tRNA (guanine(37)-N(1))-methyltransferase from Anopheles darlingi (Mosquito).